Reading from the N-terminus, the 165-residue chain is Plastocyanin, chloroplastic (165 aa).

Residues 1–66 (MATVTSSAAV…AGILAGNAMA (66 aa)) constitute a chloroplast transit peptide. Residues 67-165 (AEVLLGSSDG…AGMVGKVTVN (99 aa)) form the Plastocyanin-like domain. Cu cation contacts are provided by H103, C150, H153, and M158.

This sequence belongs to the plastocyanin family. Requires Cu(2+) as cofactor.

It localises to the plastid. The protein resides in the chloroplast thylakoid membrane. Functionally, participates in electron transfer between P700 and the cytochrome b6-f complex in photosystem I. The chain is Plastocyanin, chloroplastic (PETE) from Silene latifolia subsp. alba (White campion).